Here is a 289-residue protein sequence, read N- to C-terminus: Dermonecrotic toxin LarSicTox-betaID1 (289 aa).

A signal peptide spans 1–2 (EG). Positions 3 to 11 (AEQDGSERT) are excised as a propeptide. Residue histidine 22 is part of the active site. Mg(2+) is bound by residues glutamate 42 and aspartate 44. Histidine 58 serves as the catalytic Nucleophile. 2 disulfide bridges follow: cysteine 62/cysteine 68 and cysteine 64/cysteine 207. Aspartate 102 is a binding site for Mg(2+).

The protein belongs to the arthropod phospholipase D family. Class II subfamily. Mg(2+) is required as a cofactor. As to expression, expressed by the venom gland.

It is found in the secreted. It catalyses the reaction an N-(acyl)-sphingosylphosphocholine = an N-(acyl)-sphingosyl-1,3-cyclic phosphate + choline. The enzyme catalyses N-hexanoyl-sphing-4-enine-1-phosphocholine = N-(hexanoyl)-sphing-4-enine-1,3-cyclic phosphate + choline. The catalysed reaction is N-(dodecanoyl)-sphing-4-enine-1-phosphocholine = N-dodecanoyl-sphing-4-enine-1,3-cyclic phosphate + choline. It carries out the reaction an N-(acyl)-sphingosylphosphoethanolamine = an N-(acyl)-sphingosyl-1,3-cyclic phosphate + ethanolamine. It catalyses the reaction N-dodecanoyl-heptadecasphing-4-enine-1-phosphoethanolamine = N-dodecanoyl-heptadecasphing-4-enine-1,3-cyclic phosphate + ethanolamine. The enzyme catalyses a 1-acyl-sn-glycero-3-phosphocholine = a 1-acyl-sn-glycero-2,3-cyclic phosphate + choline. The catalysed reaction is 1-tetradecanoyl-sn-glycero-3-phosphocholine = 1-tetradecanoyl-sn-glycero-2,3-cyclic phosphate + choline. It carries out the reaction 1-octanoyl-sn-glycero-3-phosphocholine = 1-octanoyl-sn-glycero-2,3-cyclic phosphate + choline. It catalyses the reaction a 1-acyl-sn-glycero-3-phosphoethanolamine = a 1-acyl-sn-glycero-2,3-cyclic phosphate + ethanolamine. The enzyme catalyses 1-tetradecanoyl-sn-glycero-3-phosphoethanolamine = 1-tetradecanoyl-sn-glycero-2,3-cyclic phosphate + ethanolamine. Functionally, dermonecrotic toxins cleave the phosphodiester linkage between the phosphate and headgroup of certain phospholipids (sphingolipid and lysolipid substrates), forming an alcohol (often choline) and a cyclic phosphate. This toxin acts on sphingomyelin (SM) and on ceramide phosphoethanolamine (CPE) with high activity. It also acts on lysophosphatidylcholine (LPC) and on lysophosphatidylethanolamine (LPE) with moderate activity. It is not active on lysophosphatidylserine (LPS), and lysophosphatidylglycerol (LPG). It acts by transphosphatidylation, releasing exclusively cyclic phosphate as second products. It is not surprising that spider toxins have affinity for ethanolamine-containing sphingolipids since they are common in insect prey. On mammals, induces dermonecrosis, hemolysis, increased vascular permeability, edema, inflammatory response, and platelet aggregation. The protein is Dermonecrotic toxin LarSicTox-betaID1 of Loxosceles arizonica (Arizona brown spider).